A 324-amino-acid polypeptide reads, in one-letter code: uncharacterized protein (324 aa).

The protein to the C-terminal of para-aminobenzoate synthase component I.

This is an uncharacterized protein from Pasteurella multocida (strain Pm70).